Reading from the N-terminus, the 1574-residue chain is Sterol 3-beta-glucosyltransferase (1574 aa).

Positions 37-48 (TFLNQNPASPNN) are enriched in polar residues. Disordered stretches follow at residues 37–61 (TFLN…NKDE) and 102–170 (ASNA…HSKL). Basic and acidic residues-rich tracts occupy residues 107-121 (EAKD…RSSR) and 128-138 (PEYRREYKLDY). Residues 139–148 (DIDESEEDDI) show a composition bias toward acidic residues. A compositionally biased stretch (basic and acidic residues) spans 149 to 170 (ESTRDENTLKPKTEDTSVHSKL). In terms of domain architecture, GRAM 1 spans 253-288 (DKLKRVFELNDDDYFYGNYNVWLVRDVLLQGHIYLT). Residues 323–471 (DVIQSGSLGM…WVNNIVKVVF (149 aa)) enclose the PH domain. Disordered regions lie at residues 389-413 (GRND…SGDE), 538-559 (RMKK…GNEP), 651-722 (ASHR…PVQG), and 774-806 (DALS…KKKN). The segment covering 692 to 701 (ITPSKIFSNK) has biased composition (polar residues). Over residues 702-711 (SRTESEKSTP) the composition is skewed to basic and acidic residues. Residues 712–722 (DRSQTTSPVQG) show a composition bias toward polar residues. The GRAM 2 domain maps to 854–920 (RHFQERFSFN…IDVDTCSKEK (67 aa)). Residues 964 to 976 (RESGNESSDDNKS) are compositionally biased toward basic and acidic residues. A disordered region spans residues 964-996 (RESGNESSDDNKSAQHGKSGCFQKTPSSAETTK). Residues 985–996 (FQKTPSSAETTK) show a composition bias toward polar residues. UDP-alpha-D-glucose-binding residues include Ser1057, Arg1058, Asp1060, Asn1333, Ile1364, His1366, His1379, Ser1382, Gly1383, Thr1384, Asp1403, and Gln1404. The interval 1505–1574 (DSDTYDADHD…DNTTVTDANK (70 aa)) is disordered. Residues 1510–1533 (DADHDSDKESDHDQTYEQDNHSDY) are compositionally biased toward basic and acidic residues. Polar residues predominate over residues 1563-1574 (GNDNTTVTDANK).

Belongs to the glycosyltransferase 28 family.

It localises to the cytoplasm. The protein resides in the membrane. It carries out the reaction a sterol + UDP-alpha-D-glucose = a sterol 3-beta-D-glucoside + UDP + H(+). The enzyme catalyses ergosterol + UDP-alpha-D-glucose = ergosteryl 3-beta-D-glucoside + UDP + H(+). In terms of biological role, sterol glycosyltransferase responsible for the glycosylation of ergosterol to form ergosterol-glucoside. In Debaryomyces hansenii (strain ATCC 36239 / CBS 767 / BCRC 21394 / JCM 1990 / NBRC 0083 / IGC 2968) (Yeast), this protein is Sterol 3-beta-glucosyltransferase.